We begin with the raw amino-acid sequence, 434 residues long: Ribosomal protein uS12 methylthiotransferase RimO (434 aa).

The MTTase N-terminal domain occupies 2–112 (AKIGFVSLGC…VLEAVQVVLP (111 aa)). The [4Fe-4S] cluster site is built by Cys-11, Cys-47, Cys-76, Cys-142, Cys-146, and Cys-149. Residues 128 to 365 (LTPRHYAYVK…LELQARVSLR (238 aa)) form the Radical SAM core domain. The TRAM domain occupies 368–434 (QRFVGKTLEV…DTYDLHGVQA (67 aa)).

This sequence belongs to the methylthiotransferase family. RimO subfamily. Requires [4Fe-4S] cluster as cofactor.

The protein localises to the cytoplasm. It carries out the reaction L-aspartate(89)-[ribosomal protein uS12]-hydrogen + (sulfur carrier)-SH + AH2 + 2 S-adenosyl-L-methionine = 3-methylsulfanyl-L-aspartate(89)-[ribosomal protein uS12]-hydrogen + (sulfur carrier)-H + 5'-deoxyadenosine + L-methionine + A + S-adenosyl-L-homocysteine + 2 H(+). Catalyzes the methylthiolation of an aspartic acid residue of ribosomal protein uS12. This is Ribosomal protein uS12 methylthiotransferase RimO from Thermus thermophilus (strain ATCC 27634 / DSM 579 / HB8).